A 144-amino-acid chain; its full sequence is Deoxyuridine 5'-triphosphate nucleotidohydrolase (144 aa).

Residues Ser66, Gly79, Asp82, Tyr85, Lys90, Arg134, Phe139, and Gly140 each contribute to the dUMP site.

The protein belongs to the dUTPase family. In terms of assembly, homotrimer. The cofactor is Mg(2+).

It catalyses the reaction dUTP + H2O = dUMP + diphosphate + H(+). The protein operates within pyrimidine metabolism; dUMP biosynthesis; dUMP from dCTP (dUTP route): step 2/2. Its function is as follows. Involved in nucleotide metabolism via production of dUMP, the immediate precursor of thymidine nucleotides, and decreases the intracellular concentration of dUTP so that uracil cannot be incorporated into DNA. This chain is Deoxyuridine 5'-triphosphate nucleotidohydrolase (DUT1), found in Candida glabrata (strain ATCC 2001 / BCRC 20586 / JCM 3761 / NBRC 0622 / NRRL Y-65 / CBS 138) (Yeast).